Reading from the N-terminus, the 337-residue chain is Inositol 2-dehydrogenase (337 aa).

This sequence belongs to the Gfo/Idh/MocA family. As to quaternary structure, homotetramer.

It catalyses the reaction myo-inositol + NAD(+) = scyllo-inosose + NADH + H(+). Functionally, involved in the oxidation of myo-inositol (MI) to 2-keto-myo-inositol (2KMI or 2-inosose). This Arthrobacter sp. (strain FB24) protein is Inositol 2-dehydrogenase.